A 241-amino-acid chain; its full sequence is 2,3,4,5-tetrahydropyridine-2,6-dicarboxylate N-acetyltransferase (241 aa).

The protein belongs to the transferase hexapeptide repeat family. DapH subfamily.

It carries out the reaction (S)-2,3,4,5-tetrahydrodipicolinate + acetyl-CoA + H2O = L-2-acetamido-6-oxoheptanedioate + CoA. Its pathway is amino-acid biosynthesis; L-lysine biosynthesis via DAP pathway; LL-2,6-diaminopimelate from (S)-tetrahydrodipicolinate (acetylase route): step 1/3. Catalyzes the transfer of an acetyl group from acetyl-CoA to tetrahydrodipicolinate. This chain is 2,3,4,5-tetrahydropyridine-2,6-dicarboxylate N-acetyltransferase, found in Thermoanaerobacter sp. (strain X514).